The primary structure comprises 594 residues: UvrABC system protein C (594 aa).

In terms of domain architecture, GIY-YIG spans 13-99 (HSSGVYQYFD…IKQLKPKYNI (87 aa)). The UVR domain maps to 205 to 240 (DKLIKELELKMERLSNNLRFEEALIYRDRIAKIQKI).

This sequence belongs to the UvrC family. As to quaternary structure, interacts with UvrB in an incision complex.

It is found in the cytoplasm. The UvrABC repair system catalyzes the recognition and processing of DNA lesions. UvrC both incises the 5' and 3' sides of the lesion. The N-terminal half is responsible for the 3' incision and the C-terminal half is responsible for the 5' incision. This Helicobacter pylori (strain Shi470) protein is UvrABC system protein C.